Consider the following 210-residue polypeptide: Pyrrolidone-carboxylate peptidase (210 aa).

Active-site residues include glutamate 80, cysteine 143, and histidine 162.

The protein belongs to the peptidase C15 family. Homotetramer.

The protein localises to the cytoplasm. It catalyses the reaction Release of an N-terminal pyroglutamyl group from a polypeptide, the second amino acid generally not being Pro.. In terms of biological role, removes 5-oxoproline from various penultimate amino acid residues except L-proline. The sequence is that of Pyrrolidone-carboxylate peptidase from Chromobacterium violaceum (strain ATCC 12472 / DSM 30191 / JCM 1249 / CCUG 213 / NBRC 12614 / NCIMB 9131 / NCTC 9757 / MK).